We begin with the raw amino-acid sequence, 334 residues long: Mevalonate kinase (334 aa).

Residue 110–120 coordinates ATP; it reads PVGAGLGSSAA. Asp161 acts as the Proton acceptor in catalysis.

The protein belongs to the GHMP kinase family. Mevalonate kinase subfamily. In terms of assembly, homodimer. The cofactor is Mg(2+).

It is found in the cytoplasm. It catalyses the reaction (R)-mevalonate + ATP = (R)-5-phosphomevalonate + ADP + H(+). It functions in the pathway isoprenoid biosynthesis; isopentenyl diphosphate biosynthesis via mevalonate pathway; isopentenyl diphosphate from (R)-mevalonate: step 1/3. Catalyzes the phosphorylation of (R)-mevalonate (MVA) to (R)-mevalonate 5-phosphate (MVAP). Functions in the mevalonate (MVA) pathway leading to isopentenyl diphosphate (IPP), a key precursor for the biosynthesis of isoprenoid compounds such as archaeal membrane lipids. This chain is Mevalonate kinase, found in Pyrococcus furiosus (strain ATCC 43587 / DSM 3638 / JCM 8422 / Vc1).